Here is a 126-residue protein sequence, read N- to C-terminus: MLSRLLKCKIHRAVVTHAELHYEGSCAIDGVLMDLAGIREYEEIHVWNVTNGKRFTTYAIRGEDHSGIISVNGGAAHQAEVGDLVIIATFGDFTEVEANAHKPRLVYANPDNTVNHTANCIPVQVA.

The Schiff-base intermediate with substrate; via pyruvic acid role is filled by S25. S25 bears the Pyruvic acid (Ser) mark. Residue T57 coordinates substrate. The Proton donor role is filled by Y58. Residue 73–75 (GGA) participates in substrate binding.

It belongs to the PanD family. Heterooctamer of four alpha and four beta subunits. Requires pyruvate as cofactor. Is synthesized initially as an inactive proenzyme, which is activated by self-cleavage at a specific serine bond to produce a beta-subunit with a hydroxyl group at its C-terminus and an alpha-subunit with a pyruvoyl group at its N-terminus.

It is found in the cytoplasm. The enzyme catalyses L-aspartate + H(+) = beta-alanine + CO2. It participates in cofactor biosynthesis; (R)-pantothenate biosynthesis; beta-alanine from L-aspartate: step 1/1. Catalyzes the pyruvoyl-dependent decarboxylation of aspartate to produce beta-alanine. The chain is Aspartate 1-decarboxylase from Acinetobacter baylyi (strain ATCC 33305 / BD413 / ADP1).